The following is a 338-amino-acid chain: NLP effector protein 6 (338 aa).

The first 19 residues, 1–19 (MRFTTIFWISLTVLATVRA), serve as a signal peptide directing secretion. A disordered region spans residues 68–119 (LTLSPSASSPAKRNVTLPPDTTMRPDPRQTEPPTEAPTPASTPAPTPDPGPW). Asn-81 is a glycosylation site (N-linked (GlcNAc...) asparagine). Over residues 101–117 (TEAPTPASTPAPTPDPG) the composition is skewed to pro residues. The short motif at 205-215 (AIMYSWYFPKD) is the Conserved undecapeptide motif I element. The short motif at 222–227 (GHRHDW) is the Hepta-peptide GHRHDWE motif II element.

It belongs to the Necrosis inducing protein (NPP1) family.

Its subcellular location is the secreted. Functionally, secreted effector that contributes strongly to virulence during infection by P.capsici. Causes large necrotic areas in both host C.annuum and non-host N.benthamiana. The sequence is that of NLP effector protein 6 from Phytophthora capsici.